The following is a 134-amino-acid chain: D-ribose pyranase (134 aa).

His20 (proton donor) is an active-site residue. Substrate-binding positions include Asp28, His99, and 123–125; that span reads FSN.

The protein belongs to the RbsD / FucU family. RbsD subfamily. Homodecamer.

It localises to the cytoplasm. It catalyses the reaction beta-D-ribopyranose = beta-D-ribofuranose. The protein operates within carbohydrate metabolism; D-ribose degradation; D-ribose 5-phosphate from beta-D-ribopyranose: step 1/2. In terms of biological role, catalyzes the interconversion of beta-pyran and beta-furan forms of D-ribose. This chain is D-ribose pyranase, found in Staphylococcus epidermidis (strain ATCC 12228 / FDA PCI 1200).